Consider the following 140-residue polypeptide: uncharacterized protein (140 aa).

Residues Glu-121 to Leu-140 form a disordered region.

This is an uncharacterized protein from Schizosaccharomyces pombe (strain 972 / ATCC 24843) (Fission yeast).